The sequence spans 381 residues: Prokineticin receptor 2 (381 aa).

Residues 1–51 are Extracellular-facing; it reads MGPQNRNTSFAPDLNPPQDHVSLNYSYGDYDLPLGEDEDVTKTQTFFAAKI. 2 N-linked (GlcNAc...) asparagine glycosylation sites follow: Asn-7 and Asn-24. A helical membrane pass occupies residues 52–72; that stretch reads VIGVALAGIMLVCGIGNFVFI. Residues 73-86 lie on the Cytoplasmic side of the membrane; the sequence is AALARYKKLRNLTN. Residues 87-107 form a helical membrane-spanning segment; that stretch reads LLIANLAISDFLVAIVCCPFE. At 108-133 the chain is on the extracellular side; that stretch reads MDYYVVRQLSWAHGHVLCASVNYLRT. An intrachain disulfide couples Cys-125 to Cys-205. Residues 134 to 154 form a helical membrane-spanning segment; it reads VSLYVSTNALLAIAIDRYLAI. Residues 155–168 lie on the Cytoplasmic side of the membrane; sequence VHPLKPRMNYQTAS. The chain crosses the membrane as a helical span at residues 169–189; it reads FLIALVWMVSILIAVPSAYFT. Over 190 to 220 the chain is Extracellular; sequence TETILVIVKNQEKIFCGQIWSVDQQLYYKSY. A helical transmembrane segment spans residues 221-241; it reads FLFVFGLEFVGPVVTMTLCYA. The Cytoplasmic segment spans residues 242–270; sequence RISQELWFKAVPGFQTEQIRKRLRCRRKT. A helical transmembrane segment spans residues 271–291; sequence VLLLMGILTAYVLCWAPFYGF. At 292–310 the chain is on the extracellular side; that stretch reads TIVRDFFPTVVVKEKHYLT. Residues 311–331 traverse the membrane as a helical segment; that stretch reads AFYVVECIAMSNSMINTICFV. At 332–381 the chain is on the cytoplasmic side; the sequence is TVKNNTMKYFKKMLRLHWRPSHYGSKSSADLDLKTSGVPATEEVDCIRLK.

It belongs to the G-protein coupled receptor 1 family. As to quaternary structure, homodimer. Expressed in several regions of the brain, including paraventricular hypothalamic nucleus, dorsal medial hypothalamic nucleus, paratenial thalamic nuclei, paracentral thalamic nucleus, lateral habenular nucleus, lateral septal nucleus, lateral globus pallidus and amygdala. Highest expression seen in paraventricular thalamic nuclei and is also extensively expressed in the suprachiasmatic nucleus.

It is found in the cell membrane. Its function is as follows. Receptor for prokineticin 2. Exclusively coupled to the G(q) subclass of heteromeric G proteins. Activation leads to mobilization of calcium, stimulation of phosphoinositide turnover and activation of p44/p42 mitogen-activated protein kinase. This Mus musculus (Mouse) protein is Prokineticin receptor 2 (Prokr2).